The chain runs to 306 residues: Elongation factor Ts (306 aa).

The tract at residues 80–83 (TDFV) is involved in Mg(2+) ion dislocation from EF-Tu.

Belongs to the EF-Ts family.

It is found in the cytoplasm. Its function is as follows. Associates with the EF-Tu.GDP complex and induces the exchange of GDP to GTP. It remains bound to the aminoacyl-tRNA.EF-Tu.GTP complex up to the GTP hydrolysis stage on the ribosome. This Methylorubrum populi (strain ATCC BAA-705 / NCIMB 13946 / BJ001) (Methylobacterium populi) protein is Elongation factor Ts.